The chain runs to 175 residues: ATP synthase subunit delta (175 aa).

It belongs to the ATPase delta chain family. As to quaternary structure, F-type ATPases have 2 components, F(1) - the catalytic core - and F(0) - the membrane proton channel. F(1) has five subunits: alpha(3), beta(3), gamma(1), delta(1), epsilon(1). F(0) has three main subunits: a(1), b(2) and c(10-14). The alpha and beta chains form an alternating ring which encloses part of the gamma chain. F(1) is attached to F(0) by a central stalk formed by the gamma and epsilon chains, while a peripheral stalk is formed by the delta and b chains.

It localises to the cell inner membrane. Its function is as follows. F(1)F(0) ATP synthase produces ATP from ADP in the presence of a proton or sodium gradient. F-type ATPases consist of two structural domains, F(1) containing the extramembraneous catalytic core and F(0) containing the membrane proton channel, linked together by a central stalk and a peripheral stalk. During catalysis, ATP synthesis in the catalytic domain of F(1) is coupled via a rotary mechanism of the central stalk subunits to proton translocation. In terms of biological role, this protein is part of the stalk that links CF(0) to CF(1). It either transmits conformational changes from CF(0) to CF(1) or is implicated in proton conduction. In Sulfurovum sp. (strain NBC37-1), this protein is ATP synthase subunit delta.